Consider the following 87-residue polypeptide: Small ribosomal subunit protein uS15c (87 aa).

This sequence belongs to the universal ribosomal protein uS15 family. As to quaternary structure, part of the 30S ribosomal subunit.

The protein resides in the plastid. Its subcellular location is the chloroplast. This chain is Small ribosomal subunit protein uS15c (rps15), found in Atropa belladonna (Belladonna).